Reading from the N-terminus, the 77-residue chain is Thioredoxin (77 aa).

Active-site nucleophile residues include Cys11 and Cys14. Cys11 and Cys14 are oxidised to a cystine.

The protein belongs to the glutaredoxin family.

In terms of biological role, does not function as a glutathione-disulfide oxidoreductase in the presence of glutathione and glutathione reductase. Has low thioredoxin activity in vitro. The polypeptide is Thioredoxin (Methanothermobacter thermautotrophicus (strain ATCC 29096 / DSM 1053 / JCM 10044 / NBRC 100330 / Delta H) (Methanobacterium thermoautotrophicum)).